The sequence spans 419 residues: Acyl-[acyl-carrier-protein] hydrolase FATB1, chloroplastic (419 aa).

Residues Met1 to Ala50 constitute a chloroplast transit peptide. The segment at Met1–Ala84 is disordered. A compositionally biased stretch (polar residues) spans Ser61–Ser78. Catalysis depends on residues Asn315, His317, and Cys352. A disordered region spans residues Ser390–Ser419. The span at Ala399 to Ser419 shows a compositional bias: polar residues.

Belongs to the acyl-ACP thioesterase family.

It is found in the plastid. The protein localises to the chloroplast. It catalyses the reaction octanoyl-[ACP] + H2O = octanoate + holo-[ACP] + H(+). It carries out the reaction decanoyl-[ACP] + H2O = decanoate + holo-[ACP] + H(+). Its function is as follows. Plays an essential role in chain termination during de novo fatty acid synthesis. Possesses thioesterase activity for short chain acyl-ACPs. Substrate preference is 8:0 &gt; 10:0. The polypeptide is Acyl-[acyl-carrier-protein] hydrolase FATB1, chloroplastic (Cuphea viscosissima (Blue waxweed)).